Consider the following 295-residue polypeptide: Proline-rich proteoglycan 2 (295 aa).

Positions 1-16 (MLVVLLTAALLVLSSA) are cleaved as a signal peptide. The disordered stretch occupies residues 16-295 (AQGVDEEVVY…QSSFLWSFSA (280 aa)). The segment covering 26–41 (EDSSQQLELEQQSQGH) has biased composition (low complexity). Over residues 48-58 (PPPGGLPPRPP) the composition is skewed to pro residues. Residues 62–78 (ENGDGDDNDDGDDDGSG) show a composition bias toward acidic residues. Pro residues-rich tracts occupy residues 100-187 (PPPA…PPGG) and 194-278 (QGPP…PQGP).

In terms of processing, contains glycosaminoglycans of chondroitin-sulfate and heparan types.

It localises to the secreted. In Rattus norvegicus (Rat), this protein is Proline-rich proteoglycan 2 (Prpg2).